We begin with the raw amino-acid sequence, 273 residues long: Dermonecrotic toxin LhSicTox-alphaIA1i (273 aa).

Residue His-5 is part of the active site. Mg(2+) contacts are provided by Glu-25 and Asp-27. The Nucleophile role is filled by His-41. Cystine bridges form between Cys-45–Cys-51 and Cys-47–Cys-190. Asp-85 is a Mg(2+) binding site.

The protein belongs to the arthropod phospholipase D family. Class II subfamily. It depends on Mg(2+) as a cofactor. As to expression, expressed by the venom gland.

The protein resides in the secreted. The enzyme catalyses an N-(acyl)-sphingosylphosphocholine = an N-(acyl)-sphingosyl-1,3-cyclic phosphate + choline. The catalysed reaction is an N-(acyl)-sphingosylphosphoethanolamine = an N-(acyl)-sphingosyl-1,3-cyclic phosphate + ethanolamine. It catalyses the reaction a 1-acyl-sn-glycero-3-phosphocholine = a 1-acyl-sn-glycero-2,3-cyclic phosphate + choline. It carries out the reaction a 1-acyl-sn-glycero-3-phosphoethanolamine = a 1-acyl-sn-glycero-2,3-cyclic phosphate + ethanolamine. Its function is as follows. Dermonecrotic toxins cleave the phosphodiester linkage between the phosphate and headgroup of certain phospholipids (sphingolipid and lysolipid substrates), forming an alcohol (often choline) and a cyclic phosphate. This toxin acts on sphingomyelin (SM). It may also act on ceramide phosphoethanolamine (CPE), lysophosphatidylcholine (LPC) and lysophosphatidylethanolamine (LPE), but not on lysophosphatidylserine (LPS), and lysophosphatidylglycerol (LPG). It acts by transphosphatidylation, releasing exclusively cyclic phosphate products as second products. Induces dermonecrosis, hemolysis, increased vascular permeability, edema, inflammatory response, and platelet aggregation. The polypeptide is Dermonecrotic toxin LhSicTox-alphaIA1i (Loxosceles hirsuta (Recluse spider)).